The sequence spans 440 residues: Thymidine phosphorylase (440 aa).

The protein belongs to the thymidine/pyrimidine-nucleoside phosphorylase family. As to quaternary structure, homodimer.

The catalysed reaction is thymidine + phosphate = 2-deoxy-alpha-D-ribose 1-phosphate + thymine. The protein operates within pyrimidine metabolism; dTMP biosynthesis via salvage pathway; dTMP from thymine: step 1/2. In terms of biological role, the enzymes which catalyze the reversible phosphorolysis of pyrimidine nucleosides are involved in the degradation of these compounds and in their utilization as carbon and energy sources, or in the rescue of pyrimidine bases for nucleotide synthesis. The chain is Thymidine phosphorylase from Klebsiella pneumoniae (strain 342).